The primary structure comprises 61 residues: Small ribosomal subunit protein uS14 (61 aa).

The Zn(2+) site is built by cysteine 24, cysteine 27, cysteine 40, and cysteine 43.

Belongs to the universal ribosomal protein uS14 family. Zinc-binding uS14 subfamily. Part of the 30S ribosomal subunit. Contacts proteins S3 and S10. The cofactor is Zn(2+).

Functionally, binds 16S rRNA, required for the assembly of 30S particles and may also be responsible for determining the conformation of the 16S rRNA at the A site. This chain is Small ribosomal subunit protein uS14, found in Mycoplasma genitalium (strain ATCC 33530 / DSM 19775 / NCTC 10195 / G37) (Mycoplasmoides genitalium).